Consider the following 319-residue polypeptide: Acetyl-coenzyme A carboxylase carboxyl transferase subunit beta, chloroplastic (319 aa).

One can recognise a CoA carboxyltransferase N-terminal domain in the interval 47 to 319; it reads LWVQCDNCES…ELFYVLQSSS (273 aa). The Zn(2+) site is built by Cys51, Cys54, Cys70, and Cys73. The C4-type zinc-finger motif lies at 51-73; the sequence is CDNCESLLYIRFLRENKSVCEEC.

The protein belongs to the AccD/PCCB family. As to quaternary structure, acetyl-CoA carboxylase is a heterohexamer composed of biotin carboxyl carrier protein, biotin carboxylase and 2 subunits each of ACCase subunit alpha and ACCase plastid-coded subunit beta (accD). The cofactor is Zn(2+).

The protein resides in the plastid. It localises to the chloroplast stroma. The enzyme catalyses N(6)-carboxybiotinyl-L-lysyl-[protein] + acetyl-CoA = N(6)-biotinyl-L-lysyl-[protein] + malonyl-CoA. It participates in lipid metabolism; malonyl-CoA biosynthesis; malonyl-CoA from acetyl-CoA: step 1/1. Its function is as follows. Component of the acetyl coenzyme A carboxylase (ACC) complex. Biotin carboxylase (BC) catalyzes the carboxylation of biotin on its carrier protein (BCCP) and then the CO(2) group is transferred by the transcarboxylase to acetyl-CoA to form malonyl-CoA. The protein is Acetyl-coenzyme A carboxylase carboxyl transferase subunit beta, chloroplastic of Picea abies (Norway spruce).